A 186-amino-acid chain; its full sequence is MMSMDFEDFPVESAHRILTPRPTVMVTTVDEEGNINAAPFSFTMPVSIDPPVVAFASAPDHHTARNIESTHEFVINITPADIIERMWVTARDIPAGENELEAAGLAWTSSRRVKPPRIVEAPGHLECELLRMFEVGDHNLITGSVVSASVRSGAVKEGLLDVESVKPVLHVGGNKFVVGDHVRHVE.

It belongs to the flavoredoxin family. Homodimer. Requires FMN as cofactor.

This is Protein MTH_152 from Methanothermobacter thermautotrophicus (strain ATCC 29096 / DSM 1053 / JCM 10044 / NBRC 100330 / Delta H) (Methanobacterium thermoautotrophicum).